The primary structure comprises 526 residues: Bifunctional purine biosynthesis protein PurH (526 aa).

Residues 15 to 161 form the MGS-like domain; it reads DVVPIRRALI…KNHANVAIVV (147 aa).

Belongs to the PurH family.

The enzyme catalyses (6R)-10-formyltetrahydrofolate + 5-amino-1-(5-phospho-beta-D-ribosyl)imidazole-4-carboxamide = 5-formamido-1-(5-phospho-D-ribosyl)imidazole-4-carboxamide + (6S)-5,6,7,8-tetrahydrofolate. It catalyses the reaction IMP + H2O = 5-formamido-1-(5-phospho-D-ribosyl)imidazole-4-carboxamide. The protein operates within purine metabolism; IMP biosynthesis via de novo pathway; 5-formamido-1-(5-phospho-D-ribosyl)imidazole-4-carboxamide from 5-amino-1-(5-phospho-D-ribosyl)imidazole-4-carboxamide (10-formyl THF route): step 1/1. It functions in the pathway purine metabolism; IMP biosynthesis via de novo pathway; IMP from 5-formamido-1-(5-phospho-D-ribosyl)imidazole-4-carboxamide: step 1/1. This chain is Bifunctional purine biosynthesis protein PurH, found in Leifsonia xyli subsp. xyli (strain CTCB07).